Reading from the N-terminus, the 399-residue chain is Chorismate synthase (399 aa).

The NADP(+) site is built by Arg40 and Arg46. Residues 135–137, 256–257, Gly301, 316–320, and Arg342 contribute to the FMN site; these read RAS, QA, and KPIAT.

The protein belongs to the chorismate synthase family. As to quaternary structure, homotetramer. Requires FMNH2 as cofactor.

It catalyses the reaction 5-O-(1-carboxyvinyl)-3-phosphoshikimate = chorismate + phosphate. It participates in metabolic intermediate biosynthesis; chorismate biosynthesis; chorismate from D-erythrose 4-phosphate and phosphoenolpyruvate: step 7/7. Catalyzes the anti-1,4-elimination of the C-3 phosphate and the C-6 proR hydrogen from 5-enolpyruvylshikimate-3-phosphate (EPSP) to yield chorismate, which is the branch point compound that serves as the starting substrate for the three terminal pathways of aromatic amino acid biosynthesis. This reaction introduces a second double bond into the aromatic ring system. The polypeptide is Chorismate synthase (Paenarthrobacter aurescens (strain TC1)).